We begin with the raw amino-acid sequence, 83 residues long: Hainantoxin-III 2 (83 aa).

The signal sequence occupies residues 1–21; that stretch reads MKASMYLALAGLVLLFVVGYA. The propeptide occupies 22–48; sequence SESEEKEFPRELLSKIFAVDDFKGEER. Cystine bridges form between C50–C65, C57–C70, and C64–C77. L81 is modified (leucine amide).

It belongs to the neurotoxin 10 (Hwtx-1) family. 15 (Hntx-3) subfamily. In terms of assembly, monomer. In terms of tissue distribution, expressed by the venom gland.

It is found in the secreted. Selective antagonist of neuronal tetrodotoxin (TTX)-sensitive voltage-gated sodium channels (IC(50)=1270 nM on Nav1.1/SCN1A, 270 nM on Nav1.2/SCN2A, 491 nM on Nav1.3/SCN3A and 232 nM on Nav1.7/SCN9A). This toxin suppress Nav1.7 current amplitude without significantly altering the activation, inactivation, and repriming kinetics. Short extreme depolarizations partially activate the toxin-bound channel, indicating voltage-dependent inhibition of this toxin. This toxin increases the deactivation of the Nav1.7 current after extreme depolarizations. The toxin-Nav1.7 complex is gradually dissociated upon prolonged strong depolarizations in a voltage-dependent manner, and the unbound toxin rebinds to Nav1.7 after a long repolarization. Moreover, analysis of chimeric channels showed that the DIIS3-S4 linker is critical for toxin binding to Nav1.7. These data are consistent with this toxin interacting with Nav1.7 site 4 and trapping the domain II voltage sensor in the closed state. In Cyriopagopus hainanus (Chinese bird spider), this protein is Hainantoxin-III 2.